The sequence spans 304 residues: Ribonuclease BN (304 aa).

H63, H65, D67, H68, H140, D211, and H269 together coordinate Zn(2+). The active-site Proton acceptor is the D67.

It belongs to the RNase Z family. RNase BN subfamily. In terms of assembly, homodimer. The cofactor is Zn(2+).

Its function is as follows. Zinc phosphodiesterase, which has both exoribonuclease and endoribonuclease activities. The chain is Ribonuclease BN from Erwinia tasmaniensis (strain DSM 17950 / CFBP 7177 / CIP 109463 / NCPPB 4357 / Et1/99).